We begin with the raw amino-acid sequence, 371 residues long: Neuropeptide Y receptor type 6 (371 aa).

The Extracellular segment spans residues 1–31 (MEVSLNDPASNKTSAKSNSSAFFYFESCQSP). N-linked (GlcNAc...) asparagine glycosylation is found at asparagine 11 and asparagine 18. Residues 32-52 (SLALLLLLIAYTVVLIMGICG) form a helical membrane-spanning segment. The Cytoplasmic portion of the chain corresponds to 53 to 72 (NLSLITIIFKKQREAQNVTN). Residues 73–93 (ILIANLSLSDILVCVMCIPFT) form a helical membrane-spanning segment. Residues 94–111 (AIYTLMDRWIFGNTMCKL) are Extracellular-facing. Residues cysteine 109 and cysteine 196 are joined by a disulfide bond. A helical transmembrane segment spans residues 112–132 (TSYVQSVSISVSIFSLVLIAI). At 133-150 (ERYQLIVNPRGWKPSASH) the chain is on the cytoplasmic side. The helical transmembrane segment at 151–171 (AYWGIMLIWLFSLLLSIPLLL) threads the bilayer. The Extracellular segment spans residues 172-213 (SYHLTDEPFRNLSLPTDLYSHHVVCVEHWPSKTNQLLYSTSL). A glycan (N-linked (GlcNAc...) asparagine) is linked at asparagine 182. A helical membrane pass occupies residues 214–234 (IMLQYFVPLGFMFICYLKIVI). Residues 235 to 263 (CLHKRNSKIDRRRENESRLTENKRINTML) are Cytoplasmic-facing. Residues 264-284 (ISIVVTFAACWLPLNTFNVIF) form a helical membrane-spanning segment. The Extracellular portion of the chain corresponds to 285–297 (DWYHEVLMSCHHD). A helical transmembrane segment spans residues 298 to 318 (LVFAICHLVAMVSTCINPLFY). Residues 319 to 371 (GFLNRNFQKDLVVLIHHCLCFALRERYENIAISTLHTDESKGSLRVAHIPAGI) are Cytoplasmic-facing. Cysteine 336 carries S-palmitoyl cysteine lipidation.

It belongs to the G-protein coupled receptor 1 family. In terms of tissue distribution, expressed in hippocampus, striatum, hypothalamus, cerebellum, small intestine, colon and adrenal gland.

It localises to the cell membrane. Its function is as follows. Receptor for neuropeptide Y and peptide YY. The activity of this receptor is mediated by G proteins that inhibit adenylate cyclase activity. This chain is Neuropeptide Y receptor type 6 (NPY6R), found in Oryctolagus cuniculus (Rabbit).